Reading from the N-terminus, the 113-residue chain is T cell receptor alpha variable 8-3 (113 aa).

The signal sequence occupies residues 1–20 (MLLELIPLLGIHFVLRTARA). Positions 21-113 (QSVTQPDIHI…DAAEYFCAVG (93 aa)) constitute an Ig-like domain. A disulfide bridge connects residues C42 and C110. An N-linked (GlcNAc...) asparagine glycan is attached at N43.

As to quaternary structure, alpha-beta TR is a heterodimer composed of an alpha and beta chain; disulfide-linked. The alpha-beta TR is associated with the transmembrane signaling CD3 coreceptor proteins to form the TR-CD3 (TcR or TCR). The assembly of alpha-beta TR heterodimers with CD3 occurs in the endoplasmic reticulum where a single alpha-beta TR heterodimer associates with one CD3D-CD3E heterodimer, one CD3G-CD3E heterodimer and one CD247 homodimer forming a stable octameric structure. CD3D-CD3E and CD3G-CD3E heterodimers preferentially associate with TR alpha and TR beta chains, respectively. The association of the CD247 homodimer is the last step of TcR assembly in the endoplasmic reticulum and is required for transport to the cell surface.

Its subcellular location is the cell membrane. V region of the variable domain of T cell receptor (TR) alpha chain that participates in the antigen recognition. Alpha-beta T cell receptors are antigen specific receptors which are essential to the immune response and are present on the cell surface of T lymphocytes. Recognize peptide-major histocompatibility (MH) (pMH) complexes that are displayed by antigen presenting cells (APC), a prerequisite for efficient T cell adaptive immunity against pathogens. Binding of alpha-beta TR to pMH complex initiates TR-CD3 clustering on the cell surface and intracellular activation of LCK that phosphorylates the ITAM motifs of CD3G, CD3D, CD3E and CD247 enabling the recruitment of ZAP70. In turn ZAP70 phosphorylates LAT, which recruits numerous signaling molecules to form the LAT signalosome. The LAT signalosome propagates signal branching to three major signaling pathways, the calcium, the mitogen-activated protein kinase (MAPK) kinase and the nuclear factor NF-kappa-B (NF-kB) pathways, leading to the mobilization of transcription factors that are critical for gene expression and essential for T cell growth and differentiation. The T cell repertoire is generated in the thymus, by V-(D)-J rearrangement. This repertoire is then shaped by intrathymic selection events to generate a peripheral T cell pool of self-MH restricted, non-autoaggressive T cells. Post-thymic interaction of alpha-beta TR with the pMH complexes shapes TR structural and functional avidity. The protein is T cell receptor alpha variable 8-3 of Homo sapiens (Human).